Here is a 744-residue protein sequence, read N- to C-terminus: Dual specificity protein kinase shkD (744 aa).

The segment at 1 to 276 (MKRFFSNLFK…SGPPEILPEE (276 aa)) is disordered. Low complexity-rich tracts occupy residues 25-70 (PTTS…NSNQ), 79-107 (SPST…SFTP), and 127-200 (TSTT…QTAS). Over residues 201–210 (VNHTSSDQSL) the composition is skewed to polar residues. The segment covering 211 to 236 (NAQNVTQTNNNNNNNNNNNNNNNANN) has biased composition (low complexity). One can recognise a Protein kinase domain in the interval 277-534 (IDRTDFLGQG…EILFRLNEIL (258 aa)). ATP-binding positions include 283-291 (LGQGSFGSV) and Lys304. Residue Asp400 is the Proton acceptor of the active site. The 94-residue stretch at 641–734 (WFHGDIVREQ…LVPCPKFTQE (94 aa)) folds into the SH2 domain.

This sequence belongs to the protein kinase superfamily. Ser/Thr protein kinase family. SH2 domain-containing protein kinase subfamily.

It localises to the membrane. The catalysed reaction is L-seryl-[protein] + ATP = O-phospho-L-seryl-[protein] + ADP + H(+). It carries out the reaction L-threonyl-[protein] + ATP = O-phospho-L-threonyl-[protein] + ADP + H(+). Functionally, required for proper chemotaxis and phagocytosis; proper spatiotemporal control of F-actin levels in chemotaxing cells. Negative regulator of the PI3K (phosphatidylinositol 3 kinase) pathway. Predominantly phosphorylates serines and threonines and tyrosines at a lower level. The chain is Dual specificity protein kinase shkD (shkD) from Dictyostelium discoideum (Social amoeba).